The chain runs to 84 residues: MENDVSSLMLEDEKGDKVKFQVVTKFDIEDREYIIVVPEENEDSKEAIVLKIVEGEDGREAFITVEDDEEFNQVSEVYEALFND.

It belongs to the UPF0473 family.

The polypeptide is UPF0473 protein CKL_1327 (Clostridium kluyveri (strain ATCC 8527 / DSM 555 / NBRC 12016 / NCIMB 10680 / K1)).